The chain runs to 646 residues: Threonine--tRNA ligase (646 aa).

One can recognise a TGS domain in the interval 1–61; the sequence is MIKITFPDGS…NEDASVVLYK (61 aa). Residues 242 to 541 form a catalytic region; it reads DHRKIGKEMQ…LIEHTAGKFP (300 aa). 3 residues coordinate Zn(2+): C337, H388, and H518.

This sequence belongs to the class-II aminoacyl-tRNA synthetase family. As to quaternary structure, homodimer. The cofactor is Zn(2+).

Its subcellular location is the cytoplasm. The catalysed reaction is tRNA(Thr) + L-threonine + ATP = L-threonyl-tRNA(Thr) + AMP + diphosphate + H(+). In terms of biological role, catalyzes the attachment of threonine to tRNA(Thr) in a two-step reaction: L-threonine is first activated by ATP to form Thr-AMP and then transferred to the acceptor end of tRNA(Thr). Also edits incorrectly charged L-seryl-tRNA(Thr). This is Threonine--tRNA ligase from Bacteroides fragilis (strain YCH46).